A 344-amino-acid polypeptide reads, in one-letter code: Methionine aminopeptidase 1C, chloroplastic/mitochondrial (344 aa).

Position 172 (His172) interacts with substrate. A divalent metal cation is bound by residues Asp189, Asp200, and His262. His269 lines the substrate pocket. Positions 296 and 327 each coordinate a divalent metal cation.

The protein belongs to the peptidase M24A family. Methionine aminopeptidase type 1 subfamily. Requires Co(2+) as cofactor. It depends on Zn(2+) as a cofactor. Mn(2+) serves as cofactor. The cofactor is Fe(2+). Ubiquitous.

The protein localises to the plastid. The protein resides in the chloroplast. It localises to the mitochondrion. The catalysed reaction is Release of N-terminal amino acids, preferentially methionine, from peptides and arylamides.. In terms of biological role, removes the N-terminal methionine from nascent proteins. The N-terminal methionine is often cleaved when the second residue in the primary sequence is small and uncharged (Met-Ala-, Cys, Gly, Pro, Ser, Thr, or Val). The sequence is that of Methionine aminopeptidase 1C, chloroplastic/mitochondrial (MAP1C) from Arabidopsis thaliana (Mouse-ear cress).